Reading from the N-terminus, the 181-residue chain is SRP-independent targeting protein 2 (181 aa).

The Cytoplasmic portion of the chain corresponds to 1-15 (MAGKAGRKQASSNAK). Residues 16 to 36 (IIQGLYKQVSLFLGMAIVRLF) traverse the membrane as a helical segment. Over 37–45 (ISRKVTIGQ) the chain is Lumenal. A helical membrane pass occupies residues 46-66 (WIKLVALNVPMFVALYIIVLS). At 67 to 89 (GKPKYDGNRVVKQGIDLNDNTNL) the chain is on the cytoplasmic side. A helical transmembrane segment spans residues 90-110 (ISYFFDLIYLSLFGNIGIIAF). At 111–112 (RT) the chain is on the lumenal side. A helical membrane pass occupies residues 113 to 133 (FKFWWCLLLCPIYAGYKLYGL). At 134-181 (KNMFMPGAQQTQADNRSKNANEGQSKSKRQMKRERRGETDSKIKYKYR) the chain is on the cytoplasmic side. Residues 144-157 (TQADNRSKNANEGQ) are compositionally biased toward polar residues. Residues 144–181 (TQADNRSKNANEGQSKSKRQMKRERRGETDSKIKYKYR) form a disordered region. The segment covering 168 to 181 (RRGETDSKIKYKYR) has biased composition (basic and acidic residues).

This sequence belongs to the TMEM208 family. In terms of assembly, interacts with SND1, PHO88/SND3 and the translocon complex subunit SEC61. ENV10/SND2 and PHO88/SND3 form a complex with the translocon in the endoplasmic reticulum membrane.

It localises to the endoplasmic reticulum membrane. In terms of biological role, functions in the SND pathway, a SRP (signal recognition particle) and GET (guided entry of tail-anchored proteins) independent pathway for targeting a broad range of substrate proteins to the endoplasmic reticulum. SND functions in parallel to GET in targeting proteins with downstream hydrophobic motifs. Involved in vacuolar processing and morphology. In Saccharomyces cerevisiae (strain ATCC 204508 / S288c) (Baker's yeast), this protein is SRP-independent targeting protein 2.